A 1648-amino-acid chain; its full sequence is Homeostatic regulator of DAG (1648 aa).

The 97-residue stretch at 5-101 (IPPTLPLDLQ…YRVTTINSTS (97 aa)) folds into the DMAP1-binding domain. Residues N28, N71, and N98 are each glycosylated (N-linked (GlcNAc...) asparagine). 2 disordered regions span residues 52–73 (PYTPLRSPNSRKSKHLHRRNTS) and 96–130 (TINSTSANNTPRRRSKRYTASLQSSLPGSSDENGS). Residues 60–71 (NSRKSKHLHRRN) show a composition bias toward basic residues. Composition is skewed to polar residues over residues 96-105 (TINSTSANNT) and 113-128 (YTASLQSSLPGSSDEN). A Phosphoserine modification is found at S99. Residues N128, N151, and N209 are each glycosylated (N-linked (GlcNAc...) asparagine). Positions 158 to 893 (AMTDSLPLIL…VEKKFLNNDL (736 aa)) are fatty acyl-AMP ligase-like domain 1. A helical membrane pass occupies residues 228 to 248 (VIEFTIALLGCFISGMAAVPV). 5 N-linked (GlcNAc...) asparagine glycosylation sites follow: N288, N328, N575, N644, and N730. Residue S751 is modified to Phosphoserine. N-linked (GlcNAc...) asparagine glycosylation is found at N881, N917, N995, and N1009. A fatty acyl-AMP ligase-like domain 2 region spans residues 950–1648 (VKPKLALQCS…LLSDYEKDNI (699 aa)). The helical transmembrane segment at 1061–1081 (YVAMIMACLYCNLLVIPLPSV) threads the bilayer. N1198 carries N-linked (GlcNAc...) asparagine glycosylation. A helical transmembrane segment spans residues 1224 to 1244 (GLGFMFSCLLGIYTGASTCLF). N1301, N1302, N1447, N1472, N1488, N1565, N1597, and N1634 each carry an N-linked (GlcNAc...) asparagine glycan.

The protein resides in the vacuole membrane. Its subcellular location is the mitochondrion membrane. Functionally, homeostatic regulator of a chemically distinct subset of diacylglycerols (DAGs) with C36 chain length that prevents the toxic accumulation of these specific DAGs in the logarithmic growth phase, which otherwise leads to endoplasmic reticulum stress. Maintains the basal level of DAG subspecies by directly facilitating DAG to triacylglycerol (TAG) conversion process, possibly via adenylation activity of its FLD domains. Does not affect the abundant DAG species (representing over 90% of total DAG pool), comprised of C32 and C34 chain lengths. Required for vacuole fusion-mediated osmoadaptation. This Saccharomyces cerevisiae (strain ATCC 204508 / S288c) (Baker's yeast) protein is Homeostatic regulator of DAG.